The chain runs to 477 residues: MSTAPGLLRQELSCPLCLQLFDAPVTAECGHSFCRACLIRVAGEPADDGTVACPCCQASTRPQALSTNLQLARLVEGLAQVPQGHCEEHLDPLSIYCEQDRTLVCGVCASLGSHRGHRLLPAAEAHARLKTQLPQQKAQLQEACMRKEKSVAVLEHQLVEVEETVRQFRGAVGEQLGKMRMFLAALESSLDREAERVRGEAGVALRRELSSLNSYLEQLRQMEKVLEEVADKPQTEFLMKFCLVTSRLQKILSESPPPARLDIQLPVISDDFKFQVWKKMFRALMPELEELTFDPSSAHPSLVVSASGRRVECSEQKAPPAGEDTCQFDKTVAVVAKQLLSQGEHYWEVEVGDKPRWALGVMAADASRRGRLHAVPSQGLWLLGLRDGKILEAHVEAKEPRALRTPERPPARIGLYLSFADGVLTFYDASNTDALTPLFSFHERLPGPVYPMFDVCWHDKGKNSQPLLLVGPDSEQA.

Zn(2+) contacts are provided by C14, C17, C29, H31, C34, C37, C53, C56, C86, H89, C97, D100, C105, C108, H114, and H117. The RING-type zinc finger occupies 14–57 (CPLCLQLFDAPVTAECGHSFCRACLIRVAGEPADDGTVACPCCQ). The B box-type zinc finger occupies 81 to 122 (VPQGHCEEHLDPLSIYCEQDRTLVCGVCASLGSHRGHRLLPA). Residues 135 to 232 (QQKAQLQEAC…EKVLEEVADK (98 aa)) are a coiled coil. C144 is modified (S-nitrosocysteine). Residue S255 is modified to Phosphoserine. One can recognise a B30.2/SPRY domain in the interval 271-475 (DFKFQVWKKM…PLLLVGPDSE (205 aa)).

The protein belongs to the TRIM/RBCC family. Homodimer. Homooligomer; disulfide-linked. Oligomerizes on the phospholipid membrane. Interacts with DYSF and CAV3. In terms of processing, disulfide bond formation at Cys-242 occurs in case of membrane damage that cause the entry of the oxidized milieu of the extracellular space, resulting in homooligomerization. Post-translationally, S-nitrosylation at Cys-144 stabilizes TRIM72 and protects against oxidation-induced protein degradation and cell death.

It localises to the cell membrane. Its subcellular location is the sarcolemma. The protein resides in the cytoplasmic vesicle membrane. The catalysed reaction is S-ubiquitinyl-[E2 ubiquitin-conjugating enzyme]-L-cysteine + [acceptor protein]-L-lysine = [E2 ubiquitin-conjugating enzyme]-L-cysteine + N(6)-ubiquitinyl-[acceptor protein]-L-lysine.. It functions in the pathway protein modification; protein ubiquitination. With respect to regulation, specifically binds phosphatidylserine. The binding to phospholipids enhances ubiquitination activity. Functionally, muscle-specific E3 ubiquitin-protein ligase that plays a central role in cell membrane repair by nucleating the assembly of the repair machinery at injury sites. Its ubiquitination activity is mediated by E2 ubiquitin-conjugating enzymes UBE2D1, UBE2D2 and UBE2D3. Acts as a sensor of oxidation: upon membrane damage, entry of extracellular oxidative environment results in disulfide bond formation and homooligomerization at the injury site. This oligomerization acts as a nucleation site for recruitment of TRIM72-containing vesicles to the injury site, leading to membrane patch formation. Probably acts upstream of the Ca(2+)-dependent membrane resealing process. Required for transport of DYSF to sites of cell injury during repair patch formation. Regulates membrane budding and exocytosis. May be involved in the regulation of the mobility of KCNB1-containing endocytic vesicles. In Rattus norvegicus (Rat), this protein is Tripartite motif-containing protein 72.